Here is a 534-residue protein sequence, read N- to C-terminus: MRLLTTVAALRCYLNKRRWESQLTASEEQILDSMTSWYQTAIGLVPTMGSLHQGHLSLIERARHENSTVIVSIFINPLQFGPNEDYGRYPRTLEQDRQLCEQAGVDAIFAPSPEELGIPQKNIQESQVTQVIPPSVMISGLCGHSRLGHFQGVATIVTKLLNLVQPDRAYFGQKDGQQLAVIKRLVADLNLPVEIVACPTVREASGLACSSRNQYLTAPEKQQAAVLYRGLLQAEAAFKAGVRYSSRLREVVRQELAKVSSVLVEYIELVEPTTLMPLDKIQEEGMLAIAARLGSTRLIDNTILRDRQPIIAIDGPAGAGKSTVARQVATKLGLVYLDTGAMYRAVTWLVLQQGIAIDDDCAIAELANNCKIELTPSQDLQSPVRVWINDTDVTQDIRTIEVTSQVSAIAAQAAVREALVKQQQRWGKRGGLVAEGRDIGTHVFPDAEVKIFLTASVGERARRRQQDFQKQGQPEVSLEQLEKDIAERDWKDSTRKVSPLQKAADAVELQTDGLSISDVASQIVDYYQQRLSQW.

The pantoate--beta-alanine ligase stretch occupies residues 1-302; that stretch reads MRLLTTVAAL…LGSTRLIDNT (302 aa). Residue 48 to 55 coordinates ATP; it reads MGSLHQGH. The Proton donor role is filled by His55. (R)-pantoate is bound at residue Gln79. Gln79 lines the beta-alanine pocket. 172–175 lines the ATP pocket; sequence GQKD. Gln178 is a (R)-pantoate binding site. Residues Val201 and 209–212 contribute to the ATP site; that span reads CSSR. A cytidylate kinase region spans residues 303 to 534; it reads ILRDRQPIIA…DYYQQRLSQW (232 aa).

In the N-terminal section; belongs to the pantothenate synthetase family. This sequence in the C-terminal section; belongs to the cytidylate kinase family. Type 1 subfamily.

It localises to the cytoplasm. The enzyme catalyses (R)-pantoate + beta-alanine + ATP = (R)-pantothenate + AMP + diphosphate + H(+). It catalyses the reaction CMP + ATP = CDP + ADP. The catalysed reaction is dCMP + ATP = dCDP + ADP. It participates in cofactor biosynthesis; (R)-pantothenate biosynthesis; (R)-pantothenate from (R)-pantoate and beta-alanine: step 1/1. Catalyzes the condensation of pantoate with beta-alanine in an ATP-dependent reaction via a pantoyl-adenylate intermediate. Its function is as follows. Catalyzes the transfer of a phosphate group from ATP to either CMP or dCMP to form CDP or dCDP and ADP, respectively. This chain is Bifunctional pantoate ligase/cytidylate kinase, found in Trichormus variabilis (strain ATCC 29413 / PCC 7937) (Anabaena variabilis).